Here is a 157-residue protein sequence, read N- to C-terminus: Protein-export protein SecB (157 aa).

The protein belongs to the SecB family. As to quaternary structure, homotetramer, a dimer of dimers. One homotetramer interacts with 1 SecA dimer.

It localises to the cytoplasm. Functionally, one of the proteins required for the normal export of preproteins out of the cell cytoplasm. It is a molecular chaperone that binds to a subset of precursor proteins, maintaining them in a translocation-competent state. It also specifically binds to its receptor SecA. This chain is Protein-export protein SecB, found in Methylobacillus flagellatus (strain ATCC 51484 / DSM 6875 / VKM B-1610 / KT).